The chain runs to 442 residues: Trigger factor (442 aa).

The 86-residue stretch at 163–248 (YDRVTINYCI…IIKIEKKQEL (86 aa)) folds into the PPIase FKBP-type domain.

Belongs to the FKBP-type PPIase family. Tig subfamily.

The protein resides in the cytoplasm. The enzyme catalyses [protein]-peptidylproline (omega=180) = [protein]-peptidylproline (omega=0). Involved in protein export. Acts as a chaperone by maintaining the newly synthesized protein in an open conformation. Functions as a peptidyl-prolyl cis-trans isomerase. The protein is Trigger factor of Buchnera aphidicola subsp. Acyrthosiphon pisum (strain Tuc7).